Here is a 235-residue protein sequence, read N- to C-terminus: Uridylate kinase (235 aa).

9–12 (KLSG) is an ATP binding site. Glycine 51 lines the UMP pocket. ATP-binding residues include glycine 52 and arginine 56. UMP-binding positions include aspartate 71 and 132–139 (TGNPYFTT). ATP-binding residues include threonine 159, tyrosine 165, and aspartate 168.

Belongs to the UMP kinase family. Homohexamer.

It localises to the cytoplasm. The enzyme catalyses UMP + ATP = UDP + ADP. It functions in the pathway pyrimidine metabolism; CTP biosynthesis via de novo pathway; UDP from UMP (UMPK route): step 1/1. With respect to regulation, inhibited by UTP. Functionally, catalyzes the reversible phosphorylation of UMP to UDP. This chain is Uridylate kinase, found in Cytophaga hutchinsonii (strain ATCC 33406 / DSM 1761 / CIP 103989 / NBRC 15051 / NCIMB 9469 / D465).